The chain runs to 76 residues: Immune protein Tsi5 (76 aa).

2 helical membrane passes run 19 to 39 (LLMT…EWFF) and 43 to 63 (WVTV…LYLY).

It localises to the membrane. In terms of biological role, immunity protein that plays a role in preventing early activation of toxin Tse5. In Pseudomonas aeruginosa (strain ATCC 15692 / DSM 22644 / CIP 104116 / JCM 14847 / LMG 12228 / 1C / PRS 101 / PAO1), this protein is Immune protein Tsi5.